Reading from the N-terminus, the 969-residue chain is RNA polymerase-associated protein RapA (969 aa).

The 171-residue stretch at Glu-164–Asp-334 folds into the Helicase ATP-binding domain. Position 177–184 (Asp-177–Thr-184) interacts with ATP. A DEAH box motif is present at residues Asp-280 to His-283. Residues Arg-492–Arg-686 form the Helicase C-terminal domain.

Belongs to the SNF2/RAD54 helicase family. RapA subfamily. Interacts with the RNAP. Has a higher affinity for the core RNAP than for the holoenzyme. Its ATPase activity is stimulated by binding to RNAP.

Transcription regulator that activates transcription by stimulating RNA polymerase (RNAP) recycling in case of stress conditions such as supercoiled DNA or high salt concentrations. Probably acts by releasing the RNAP, when it is trapped or immobilized on tightly supercoiled DNA. Does not activate transcription on linear DNA. Probably not involved in DNA repair. The chain is RNA polymerase-associated protein RapA from Vibrio parahaemolyticus serotype O3:K6 (strain RIMD 2210633).